The chain runs to 431 residues: Enolase (431 aa).

Q168 contributes to the (2R)-2-phosphoglycerate binding site. E210 serves as the catalytic Proton donor. Mg(2+) is bound by residues D247, E291, and D318. Positions 343, 372, 373, and 394 each coordinate (2R)-2-phosphoglycerate. Catalysis depends on K343, which acts as the Proton acceptor.

It belongs to the enolase family. In terms of assembly, component of the RNA degradosome, a multiprotein complex involved in RNA processing and mRNA degradation. The cofactor is Mg(2+).

It localises to the cytoplasm. The protein resides in the secreted. Its subcellular location is the cell surface. It catalyses the reaction (2R)-2-phosphoglycerate = phosphoenolpyruvate + H2O. It functions in the pathway carbohydrate degradation; glycolysis; pyruvate from D-glyceraldehyde 3-phosphate: step 4/5. Functionally, catalyzes the reversible conversion of 2-phosphoglycerate (2-PG) into phosphoenolpyruvate (PEP). It is essential for the degradation of carbohydrates via glycolysis. This Acinetobacter baumannii (strain SDF) protein is Enolase.